A 143-amino-acid polypeptide reads, in one-letter code: Actin-depolymerizing factor 5 (143 aa).

The ADF-H domain occupies 11–143 (GMNVKEECQR…GYDVIRGRAQ (133 aa)).

Belongs to the actin-binding proteins ADF family.

Its function is as follows. Actin-depolymerizing protein. Severs actin filaments (F-actin) and binds to actin monomers. In Oryza sativa subsp. japonica (Rice), this protein is Actin-depolymerizing factor 5 (ADF5).